We begin with the raw amino-acid sequence, 144 residues long: Large ribosomal subunit protein uL13 (144 aa).

It belongs to the universal ribosomal protein uL13 family. As to quaternary structure, part of the 50S ribosomal subunit.

Functionally, this protein is one of the early assembly proteins of the 50S ribosomal subunit, although it is not seen to bind rRNA by itself. It is important during the early stages of 50S assembly. The chain is Large ribosomal subunit protein uL13 from Moorella thermoacetica (strain ATCC 39073 / JCM 9320).